The sequence spans 91 residues: Sec-independent protein translocase protein TatA (91 aa).

A helical transmembrane segment spans residues 1-21 (MGAMQPMHWLIVAVVVVILFG).

Belongs to the TatA/E family. The Tat system comprises two distinct complexes: a TatABC complex, containing multiple copies of TatA, TatB and TatC subunits, and a separate TatA complex, containing only TatA subunits. Substrates initially bind to the TatABC complex, which probably triggers association of the separate TatA complex to form the active translocon.

The protein resides in the cell membrane. Its function is as follows. Part of the twin-arginine translocation (Tat) system that transports large folded proteins containing a characteristic twin-arginine motif in their signal peptide across membranes. TatA could form the protein-conducting channel of the Tat system. This Rhodococcus erythropolis (strain PR4 / NBRC 100887) protein is Sec-independent protein translocase protein TatA.